Reading from the N-terminus, the 138-residue chain is Large ribosomal subunit protein bL17 (138 aa).

This sequence belongs to the bacterial ribosomal protein bL17 family. As to quaternary structure, part of the 50S ribosomal subunit. Contacts protein L32.

In Methylorubrum populi (strain ATCC BAA-705 / NCIMB 13946 / BJ001) (Methylobacterium populi), this protein is Large ribosomal subunit protein bL17.